We begin with the raw amino-acid sequence, 556 residues long: Membrane protein insertase YidC (556 aa).

The next 5 helical transmembrane spans lie at 6–26, 332–352, 358–378, 428–448, and 501–521; these read IVLY…WQID, LDLT…FSLM, VVGN…LAFY, LGGC…YWVL, and VMMF…SGLV.

It belongs to the OXA1/ALB3/YidC family. Type 1 subfamily. In terms of assembly, interacts with the Sec translocase complex via SecD. Specifically interacts with transmembrane segments of nascent integral membrane proteins during membrane integration.

It is found in the cell inner membrane. Functionally, required for the insertion and/or proper folding and/or complex formation of integral membrane proteins into the membrane. Involved in integration of membrane proteins that insert both dependently and independently of the Sec translocase complex, as well as at least some lipoproteins. Aids folding of multispanning membrane proteins. The polypeptide is Membrane protein insertase YidC (Legionella pneumophila (strain Paris)).